The sequence spans 418 residues: MTIPFDHWPEWPQHSDRTRRKIEEVFQSNRWAISGYWTGEESMERKFAKAFADFNGVPYCVPTTSGSTALMLALEALGIGEGDEVIVPSLTWIATATAVLNVNALPVFVDVEADTYCIDPQLIKSAITDKTKAIIPVHLFGSMANMDEINEIAQEHNLFVIEDCAQSHGSVWNNQRAGTIGDIGAFSCQQGKVLTAGEGGIIVTKNPRLFELIQQLRADSRVYCDDSSELMHGDMQLVKKGDIQGSNYCLSEFQSAILLDQLQELDDKNAIREKNAMFLNDALSKIDGIKVMKRPPQVSRQTYYGYVFRFDPVKFGGLNADQFCEILREKLNMGTFYLHPPYLPVHKNPLFCPWTKNRYLKSVRKTEAYWRGLHYPVSERASGQSIVIHHAILLAEPSHLSLLVDAVAELARKFCVTH.

N6-(pyridoxal phosphate)lysine is present on Lys192.

This sequence belongs to the DegT/DnrJ/EryC1 family. L-glutamine:2-deoxy-scyllo-inosose/scyllo-inosose aminotransferase subfamily. It depends on pyridoxal 5'-phosphate as a cofactor.

It catalyses the reaction 2-deoxy-L-scyllo-inosose + L-glutamine = 2-deoxy-scyllo-inosamine + 2-oxoglutaramate. The catalysed reaction is 3-amino-2,3-dideoxy-scyllo-inosose + L-glutamine = 2-deoxystreptamine + 2-oxoglutaramate. Its pathway is metabolic intermediate biosynthesis; 2-deoxystreptamine biosynthesis; 2-deoxystreptamine from D-glucose 6-phosphate: step 2/4. It participates in metabolic intermediate biosynthesis; 2-deoxystreptamine biosynthesis; 2-deoxystreptamine from D-glucose 6-phosphate: step 4/4. The protein operates within antibiotic biosynthesis; butirosin biosynthesis. Functionally, catalyzes the PLP-dependent transamination of 2-deoxy-scyllo-inosose (2-DOI) to form 2-deoxy-scyllo-inosamine (2-DOIA) using L-glutamine as the amino donor. Also catalyzes the transamination of 3-amino-2,3-dideoxy-scyllo-inosose (keto-2-DOIA) into 2-deoxystreptamine (2-DOS). The sequence is that of L-glutamine:2-deoxy-scyllo-inosose aminotransferase (btrR) from Niallia circulans (Bacillus circulans).